The primary structure comprises 235 residues: Vacuolar protein sorting-associated protein 60.1 (235 aa).

Residues 1 to 29 (MRRVFGAKKNTEPPPSIQDASDRINKRGD) are disordered. The span at 20-29 (ASDRINKRGD) shows a compositional bias: basic and acidic residues. Residues 99–148 (LKDAQQTMTALKSANKELKGMMKTVKIQDIDNLQDEMMDLMDVSSEIQES) adopt a coiled-coil conformation. Positions 175-235 (MGNETEADGM…PAVPRASLRG (61 aa)) are disordered.

It belongs to the SNF7 family. As to quaternary structure, interacts with SKD1/VPS4 and LIP5. Interacts with VPS2.2.

The protein resides in the endosome. The protein localises to the multivesicular body membrane. In terms of biological role, probable peripherally associated component of the endosomal sorting required for transport complex III (ESCRT-III) which is involved in multivesicular bodies (MVBs) formation and sorting of endosomal cargo proteins into MVBs. The protein is Vacuolar protein sorting-associated protein 60.1 of Arabidopsis thaliana (Mouse-ear cress).